The primary structure comprises 273 residues: Protein ALUMINUM SENSITIVE 3 (273 aa).

The next 7 membrane-spanning stretches (helical) occupy residues 14–34 (WLIV…VVLL), 51–71 (IYSV…LQFI), 76–96 (NSGW…YTAG), 107–127 (YVAG…LVLL), 136–156 (YMIP…GVTM), 191–213 (ALVI…SLPG), and 228–248 (AIQL…VSSI).

This sequence belongs to the UPF0014 family. In terms of tissue distribution, expressed in roots, leaves, stems, and flowers.

The protein resides in the cell membrane. Its function is as follows. Required for aluminum (Al) resistance/tolerance, probably by translocating Al from sensitive tissues such as growing roots to tissues less sensisitive to the toxic effects of Al. The protein is Protein ALUMINUM SENSITIVE 3 (ALS3) of Arabidopsis thaliana (Mouse-ear cress).